A 184-amino-acid chain; its full sequence is Ribose 1,5-bisphosphate phosphokinase PhnN (184 aa).

ATP is bound at residue 11–18; sequence GPSGAGKD.

Belongs to the ribose 1,5-bisphosphokinase family.

It catalyses the reaction alpha-D-ribose 1,5-bisphosphate + ATP = 5-phospho-alpha-D-ribose 1-diphosphate + ADP. It functions in the pathway metabolic intermediate biosynthesis; 5-phospho-alpha-D-ribose 1-diphosphate biosynthesis; 5-phospho-alpha-D-ribose 1-diphosphate from D-ribose 5-phosphate (route II): step 3/3. Functionally, catalyzes the phosphorylation of ribose 1,5-bisphosphate to 5-phospho-D-ribosyl alpha-1-diphosphate (PRPP). The sequence is that of Ribose 1,5-bisphosphate phosphokinase PhnN from Burkholderia pseudomallei (strain K96243).